A 601-amino-acid chain; its full sequence is COP9 signalosome complex subunit 1 (601 aa).

Residues 1 to 10 (MQNELLDDPM) show a composition bias toward acidic residues. Disordered regions lie at residues 1–54 (MQNE…LDNP) and 268–294 (DADDAEKNSQQSQQAPPQRGENAPYMV). Low complexity predominate over residues 14-24 (APAAEAAAADE). The region spanning 338–500 (TILQIKTECL…GIVRILDERD (163 aa)) is the PCI domain. Residues 535–581 (SISDKETRPKRKNQKESAKFDRNFGGIDVDEDPRGIAGPSGLSDDFN) form a disordered region.

It belongs to the CSN1 family. As to quaternary structure, component of the CSN complex, probably composed of csn-1, csn-2, csn-3, csn-4, csn-5, csn-6 and csn-7. Within the complex it probably interacts directly with csn-2, csn-4 and csn-5. May interact with itself. Interacts with rbx-1.

The protein resides in the cytoplasm. It localises to the nucleus. Functionally, essential component of the COP9 signalosome complex (CSN), a complex involved in various cellular and developmental processes. The CSN complex is an essential regulator of the ubiquitin (Ubl) conjugation pathway by mediating the deneddylation of the cullin subunits of the SCF-type E3 ligase complexes, leading to decrease the Ubl ligase activity of SCF. The CSN complex plays an essential role in embryogenesis and oogenesis and is required to regulate microtubule stability in the early embryo. Mediates mei-3/katanin targeting for degradation at the meiosis to mitosis transition via deneddylation of cul-3. In Caenorhabditis elegans, this protein is COP9 signalosome complex subunit 1 (csn-1).